The sequence spans 660 residues: Bifunctional polymyxin resistance protein ArnA (660 aa).

A formyltransferase ArnAFT region spans residues 1–304 (MKAVIFAYHD…TLGLVAGARL (304 aa)). H104 (proton donor; for formyltransferase activity) is an active-site residue. (6R)-10-formyltetrahydrofolate-binding positions include R114 and 136–140 (VKRAD). Positions 314–660 (RRIRVLILGV…RSVDVAERAS (347 aa)) are dehydrogenase ArnADH. NAD(+)-binding positions include D347 and 368-369 (DI). UDP-alpha-D-glucuronate contacts are provided by residues A393, Y398, and 432–433 (TS). The active-site Proton acceptor; for decarboxylase activity is the E434. Residues R460, N492, 526–535 (KLIDGGQQKR), and Y613 contribute to the UDP-alpha-D-glucuronate site. The active-site Proton donor; for decarboxylase activity is R619.

It in the N-terminal section; belongs to the Fmt family. UDP-L-Ara4N formyltransferase subfamily. In the C-terminal section; belongs to the NAD(P)-dependent epimerase/dehydratase family. UDP-glucuronic acid decarboxylase subfamily. In terms of assembly, homohexamer, formed by a dimer of trimers.

The catalysed reaction is UDP-alpha-D-glucuronate + NAD(+) = UDP-beta-L-threo-pentopyranos-4-ulose + CO2 + NADH. It catalyses the reaction UDP-4-amino-4-deoxy-beta-L-arabinose + (6R)-10-formyltetrahydrofolate = UDP-4-deoxy-4-formamido-beta-L-arabinose + (6S)-5,6,7,8-tetrahydrofolate + H(+). It participates in nucleotide-sugar biosynthesis; UDP-4-deoxy-4-formamido-beta-L-arabinose biosynthesis; UDP-4-deoxy-4-formamido-beta-L-arabinose from UDP-alpha-D-glucuronate: step 1/3. Its pathway is nucleotide-sugar biosynthesis; UDP-4-deoxy-4-formamido-beta-L-arabinose biosynthesis; UDP-4-deoxy-4-formamido-beta-L-arabinose from UDP-alpha-D-glucuronate: step 3/3. It functions in the pathway bacterial outer membrane biogenesis; lipopolysaccharide biosynthesis. Bifunctional enzyme that catalyzes the oxidative decarboxylation of UDP-glucuronic acid (UDP-GlcUA) to UDP-4-keto-arabinose (UDP-Ara4O) and the addition of a formyl group to UDP-4-amino-4-deoxy-L-arabinose (UDP-L-Ara4N) to form UDP-L-4-formamido-arabinose (UDP-L-Ara4FN). The modified arabinose is attached to lipid A and is required for resistance to polymyxin and cationic antimicrobial peptides. This Salmonella paratyphi C (strain RKS4594) protein is Bifunctional polymyxin resistance protein ArnA.